A 489-amino-acid polypeptide reads, in one-letter code: Bifunctional protein HldE (489 aa).

The ribokinase stretch occupies residues 1-328 (METENIHSFD…ELKAQLQDQP (328 aa)). 206–209 (NKKE) serves as a coordination point for ATP. D276 is a catalytic residue. The segment at 357–489 (LTNGCFDLLH…IIQDIRNGRG (133 aa)) is cytidylyltransferase.

The protein in the N-terminal section; belongs to the carbohydrate kinase PfkB family. It in the C-terminal section; belongs to the cytidylyltransferase family. As to quaternary structure, homodimer.

It catalyses the reaction D-glycero-beta-D-manno-heptose 7-phosphate + ATP = D-glycero-beta-D-manno-heptose 1,7-bisphosphate + ADP + H(+). The enzyme catalyses D-glycero-beta-D-manno-heptose 1-phosphate + ATP + H(+) = ADP-D-glycero-beta-D-manno-heptose + diphosphate. Its pathway is nucleotide-sugar biosynthesis; ADP-L-glycero-beta-D-manno-heptose biosynthesis; ADP-L-glycero-beta-D-manno-heptose from D-glycero-beta-D-manno-heptose 7-phosphate: step 1/4. It participates in nucleotide-sugar biosynthesis; ADP-L-glycero-beta-D-manno-heptose biosynthesis; ADP-L-glycero-beta-D-manno-heptose from D-glycero-beta-D-manno-heptose 7-phosphate: step 3/4. Functionally, catalyzes the phosphorylation of D-glycero-D-manno-heptose 7-phosphate at the C-1 position to selectively form D-glycero-beta-D-manno-heptose-1,7-bisphosphate. In terms of biological role, catalyzes the ADP transfer from ATP to D-glycero-beta-D-manno-heptose 1-phosphate, yielding ADP-D-glycero-beta-D-manno-heptose. This chain is Bifunctional protein HldE, found in Desulfatibacillum aliphaticivorans.